The following is a 280-amino-acid chain: Eukaryotic translation initiation factor 3 subunit F-1 (280 aa).

Residues 8 to 138 (VRVHPVVLFQ…LRAYVCIQLG (131 aa)) form the MPN domain.

The protein belongs to the eIF-3 subunit F family. Component of the eukaryotic translation initiation factor 3 (eIF-3) complex. The eIF-3 complex interacts with pix.

The protein resides in the cytoplasm. In terms of biological role, component of the eukaryotic translation initiation factor 3 (eIF-3) complex, which is involved in protein synthesis of a specialized repertoire of mRNAs and, together with other initiation factors, stimulates binding of mRNA and methionyl-tRNAi to the 40S ribosome. The eIF-3 complex specifically targets and initiates translation of a subset of mRNAs involved in cell proliferation. The sequence is that of Eukaryotic translation initiation factor 3 subunit F-1 from Drosophila willistoni (Fruit fly).